Consider the following 170-residue polypeptide: Ribosomal RNA small subunit methyltransferase G (170 aa).

S-adenosyl-L-methionine is bound by residues Gly-70, Leu-75, 120-121 (AE), and Arg-138.

The protein belongs to the methyltransferase superfamily. RNA methyltransferase RsmG family.

Its subcellular location is the cytoplasm. Its function is as follows. Specifically methylates the N7 position of guanine in position 518 of 16S rRNA. In Mycobacterium ulcerans (strain Agy99), this protein is Ribosomal RNA small subunit methyltransferase G.